Here is a 256-residue protein sequence, read N- to C-terminus: Phosphonates import ATP-binding protein PhnC (256 aa).

Positions 5-253 (LRITGLVKEY…MLKTIYGGES (249 aa)) constitute an ABC transporter domain. Residue 38–45 (GPSGTGKS) participates in ATP binding.

This sequence belongs to the ABC transporter superfamily. Phosphonates importer (TC 3.A.1.9.1) family. As to quaternary structure, the complex is composed of two ATP-binding proteins (PhnC), two transmembrane proteins (PhnE) and a solute-binding protein (PhnD).

The protein localises to the cell inner membrane. It catalyses the reaction phosphonate(out) + ATP + H2O = phosphonate(in) + ADP + phosphate + H(+). Its function is as follows. Part of the ABC transporter complex PhnCDE involved in phosphonates import. Responsible for energy coupling to the transport system. The chain is Phosphonates import ATP-binding protein PhnC from Bordetella parapertussis (strain 12822 / ATCC BAA-587 / NCTC 13253).